The sequence spans 904 residues: Anoctamin-5 (904 aa).

Residues 1 to 290 (MVEQEGLTAK…HLIRNYFGEK (290 aa)) are Cytoplasmic-facing. Residues 291–311 (IGIYFVFLGYYTEMLLFAALV) traverse the membrane as a helical segment. Residues 312 to 371 (GLACFIYGLLSMENNRTSTEICDPDIGGQMIMCPLCDEVCDYWRLNTTCLHSKFSHLFDN) are Extracellular-facing. Asn326, Asn357, and Asn371 each carry an N-linked (GlcNAc...) asparagine glycan. The chain crosses the membrane as a helical span at residues 372 to 392 (ESTVFFALFMGIWVTLFLEFW). Residues 393–453 (KQRQARLEYE…CHRIPWYFVS (61 aa)) are Cytoplasmic-facing. The chain crosses the membrane as a helical span at residues 454-474 (GTTVTFGMALLLSSMVSILIY). The Extracellular segment spans residues 475–502 (RLSVFATFASFMESEATLQSVKSFFTPQ). The chain crosses the membrane as a helical span at residues 503-523 (LATALSGSCLNCIVILILNFF). Topologically, residues 524–548 (YEKISAWITKMEIPRTHQEYESSLT) are cytoplasmic. Residues 549–569 (LKMFLFQFVNYYSSCFYVAFF) form a helical membrane-spanning segment. The Extracellular portion of the chain corresponds to 570–667 (KGKFVGYPGS…RGLFYEYLET (98 aa)). Residues 668-688 (VIQFGFATLFVASFPLAPLFA) form a helical membrane-spanning segment. The Cytoplasmic segment spans residues 689–723 (LMNNIMGIRVDAWKLTTQYRRPVAAKAHSIGVWQD). Residues 724–744 (ILFGMAIVSVATNAFIVSFTS) form a helical membrane-spanning segment. The Extracellular portion of the chain corresponds to 745–825 (DIIPRLVYFY…FWHVLAAKMT (81 aa)). N-linked (GlcNAc...) asparagine glycans are attached at residues Asn759, Asn769, and Asn782. A helical transmembrane segment spans residues 826–846 (FIIVMEHVVFLFKFLLAWLIP). Residues 847-904 (DVPKDVVEKIKREKLMTIKIIHDFELNKLKENLDVEYGNIMKNVLVDEDNSLKAKTTV) lie on the Cytoplasmic side of the membrane.

Belongs to the anoctamin family. As to expression, highly expressed in skeletal muscle, bone tissues and thyroid gland.

It is found in the endoplasmic reticulum membrane. Its subcellular location is the cell membrane. Functionally, plays a role in plasma membrane repair in a process involving annexins. Does not exhibit calcium-activated chloride channel (CaCC) activity. The protein is Anoctamin-5 (Ano5) of Mus musculus (Mouse).